We begin with the raw amino-acid sequence, 445 residues long: Arginine biosynthesis bifunctional protein ArgJ, mitochondrial (445 aa).

Substrate-binding residues include T189, K215, T226, E312, N440, and S445. The active-site Nucleophile is the T226.

Belongs to the ArgJ family. Heterodimer of an alpha and a beta chain. Post-translationally, the alpha and beta chains are autoproteolytically processed from a single precursor protein within the mitochondrion.

The protein localises to the mitochondrion matrix. It carries out the reaction N(2)-acetyl-L-ornithine + L-glutamate = N-acetyl-L-glutamate + L-ornithine. The enzyme catalyses L-glutamate + acetyl-CoA = N-acetyl-L-glutamate + CoA + H(+). The protein operates within amino-acid biosynthesis; L-arginine biosynthesis; L-ornithine and N-acetyl-L-glutamate from L-glutamate and N(2)-acetyl-L-ornithine (cyclic): step 1/1. Its pathway is amino-acid biosynthesis; L-arginine biosynthesis; N(2)-acetyl-L-ornithine from L-glutamate: step 1/4. In terms of biological role, catalyzes two activities which are involved in the cyclic version of arginine biosynthesis: the synthesis of acetylglutamate from glutamate and acetyl-CoA, and of ornithine by transacetylation between acetylornithine and glutamate. The sequence is that of Arginine biosynthesis bifunctional protein ArgJ, mitochondrial from Schizosaccharomyces pombe (strain 972 / ATCC 24843) (Fission yeast).